A 119-amino-acid chain; its full sequence is Large ribosomal subunit protein uL18 (119 aa).

The protein belongs to the universal ribosomal protein uL18 family. As to quaternary structure, part of the 50S ribosomal subunit; part of the 5S rRNA/L5/L18/L25 subcomplex. Contacts the 5S and 23S rRNAs.

Its function is as follows. This is one of the proteins that bind and probably mediate the attachment of the 5S RNA into the large ribosomal subunit, where it forms part of the central protuberance. The chain is Large ribosomal subunit protein uL18 from Xylella fastidiosa (strain M23).